A 191-amino-acid chain; its full sequence is Imidazoleglycerol-phosphate dehydratase (191 aa).

Belongs to the imidazoleglycerol-phosphate dehydratase family.

It localises to the cytoplasm. The enzyme catalyses D-erythro-1-(imidazol-4-yl)glycerol 3-phosphate = 3-(imidazol-4-yl)-2-oxopropyl phosphate + H2O. Its pathway is amino-acid biosynthesis; L-histidine biosynthesis; L-histidine from 5-phospho-alpha-D-ribose 1-diphosphate: step 6/9. In Methanosarcina barkeri (strain Fusaro / DSM 804), this protein is Imidazoleglycerol-phosphate dehydratase.